Consider the following 206-residue polypeptide: Orotate phosphoribosyltransferase (206 aa).

5-phospho-alpha-D-ribose 1-diphosphate contacts are provided by residues R114, K115, K118, H120, and 141-149 (EDVVTTGQS). Residues T145 and R173 each contribute to the orotate site.

The protein belongs to the purine/pyrimidine phosphoribosyltransferase family. PyrE subfamily. As to quaternary structure, homodimer. The cofactor is Mg(2+).

It carries out the reaction orotidine 5'-phosphate + diphosphate = orotate + 5-phospho-alpha-D-ribose 1-diphosphate. It functions in the pathway pyrimidine metabolism; UMP biosynthesis via de novo pathway; UMP from orotate: step 1/2. Its function is as follows. Catalyzes the transfer of a ribosyl phosphate group from 5-phosphoribose 1-diphosphate to orotate, leading to the formation of orotidine monophosphate (OMP). In Nostoc sp. (strain PCC 7120 / SAG 25.82 / UTEX 2576), this protein is Orotate phosphoribosyltransferase.